Consider the following 212-residue polypeptide: Adenine phosphoribosyltransferase (212 aa).

Belongs to the purine/pyrimidine phosphoribosyltransferase family. In terms of assembly, homodimer.

It localises to the cytoplasm. It catalyses the reaction AMP + diphosphate = 5-phospho-alpha-D-ribose 1-diphosphate + adenine. Its pathway is purine metabolism; AMP biosynthesis via salvage pathway; AMP from adenine: step 1/1. Its function is as follows. Catalyzes a salvage reaction resulting in the formation of AMP, that is energically less costly than de novo synthesis. In Mycobacterium tuberculosis (strain ATCC 25618 / H37Rv), this protein is Adenine phosphoribosyltransferase.